Here is a 255-residue protein sequence, read N- to C-terminus: Hemin import ATP-binding protein HmuV (255 aa).

The ABC transporter domain occupies 2-238 (LDVEGLHLKR…AALNAVFGID (237 aa)). 34–41 (GPNGAGKS) contacts ATP.

The protein belongs to the ABC transporter superfamily. Heme (hemin) importer (TC 3.A.1.14.5) family. As to quaternary structure, the complex is composed of two ATP-binding proteins (HmuV), two transmembrane proteins (HmuU) and a solute-binding protein (HmuT).

The protein localises to the cell inner membrane. Functionally, part of the ABC transporter complex HmuTUV involved in hemin import. Responsible for energy coupling to the transport system. This chain is Hemin import ATP-binding protein HmuV, found in Pseudomonas entomophila (strain L48).